Reading from the N-terminus, the 242-residue chain is Small ribosomal subunit protein uS2 (242 aa).

It belongs to the universal ribosomal protein uS2 family.

The chain is Small ribosomal subunit protein uS2 from Shewanella piezotolerans (strain WP3 / JCM 13877).